The following is a 528-amino-acid chain: Propionate catabolism operon regulatory protein (528 aa).

The 244-residue stretch at 218–461 folds into the Sigma-54 factor interaction domain; the sequence is MLGQSPQMEQ…RNMMERLALF (244 aa). Residue 318–327 participates in ATP binding; the sequence is AHGGTLFLDE. Positions 508 to 527 form a DNA-binding region, H-T-H motif; it reads KTAAANYLGISRTTFWRRLK.

Functionally, involved in the transcriptional regulation of the propionate catabolism operon. The sequence is that of Propionate catabolism operon regulatory protein (prpR) from Escherichia coli (strain K12).